We begin with the raw amino-acid sequence, 339 residues long: Protein FAM76B (339 aa).

Ala-2 is subject to N-acetylalanine. Ser-22 and Ser-148 each carry phosphoserine. A disordered region spans residues 144–243 (EQRKSLGSSH…INQSADSGGT (100 aa)). The span at 148-160 (SLGSSHSNSSSSS) shows a compositional bias: low complexity. Residues 167–189 (HHPKHHHHHHHHHHRHSSSHHKI) show a composition bias toward basic residues. Phosphoserine is present on Ser-193. Position 215 is a phosphothreonine (Thr-215). Residues 215-224 (TPKKKPKLES) are compositionally biased toward basic and acidic residues. A compositionally biased stretch (polar residues) spans 228–243 (NGDSSSINQSADSGGT). The stretch at 248-328 (LISQLKEEVM…QVAALSKGKK (81 aa)) forms a coiled coil.

Belongs to the FAM76 family. Interacts with HNRNPA2B1 (via C-terminus); the interaction results in retention of HNRNPA2B1 in the nucleus and inhibition of the NF-kappa-B-mediated inflammatory pathway.

It localises to the nucleus speckle. In terms of biological role, negatively regulates the NF-kappa-B-mediated inflammatory pathway by preventing the translocation of HNRNPA2B1 from the nucleus to the cytoplasm. Inhibits the PI3K/Akt/NF-kappa-B pathway-mediated polarization of M1 macrophages by binding to and stabilizing PIK3CD mRNA, resulting in increased levels of PIK3CD protein and increased levels of phosphorylated downstream target AKT which leads to decreased NF-kappa-B signaling. The sequence is that of Protein FAM76B (FAM76B) from Homo sapiens (Human).